Here is a 936-residue protein sequence, read N- to C-terminus: Isoleucine--tRNA ligase (936 aa).

Residues 58–68 (PYANGRAHLGT) carry the 'HIGH' region motif. Glu-561 is a binding site for L-isoleucyl-5'-AMP. The short motif at 602 to 606 (KMSKS) is the 'KMSKS' region element. Lys-605 contributes to the ATP binding site. Residues Cys-899, Cys-902, Cys-919, and Cys-922 each coordinate Zn(2+).

This sequence belongs to the class-I aminoacyl-tRNA synthetase family. IleS type 1 subfamily. In terms of assembly, monomer. Zn(2+) serves as cofactor.

The protein localises to the cytoplasm. It carries out the reaction tRNA(Ile) + L-isoleucine + ATP = L-isoleucyl-tRNA(Ile) + AMP + diphosphate. In terms of biological role, catalyzes the attachment of isoleucine to tRNA(Ile). As IleRS can inadvertently accommodate and process structurally similar amino acids such as valine, to avoid such errors it has two additional distinct tRNA(Ile)-dependent editing activities. One activity is designated as 'pretransfer' editing and involves the hydrolysis of activated Val-AMP. The other activity is designated 'posttransfer' editing and involves deacylation of mischarged Val-tRNA(Ile). In Coxiella burnetii (strain CbuK_Q154) (Coxiella burnetii (strain Q154)), this protein is Isoleucine--tRNA ligase.